The primary structure comprises 130 residues: Small ribosomal subunit protein uS11c (130 aa).

It belongs to the universal ribosomal protein uS11 family. In terms of assembly, part of the 30S ribosomal subunit.

The protein localises to the plastid. It is found in the chloroplast. In Pyropia yezoensis (Susabi-nori), this protein is Small ribosomal subunit protein uS11c.